Reading from the N-terminus, the 149-residue chain is Transcriptional repressor NrdR (149 aa).

A zinc finger lies at 3 to 34 (CPFCFAVDTKVIDSRLVGEGSSVRRRRQCLVC). The 91-residue stretch at 49–139 (PRVIKSNDVR…VYRSFEDIKD (91 aa)) folds into the ATP-cone domain.

This sequence belongs to the NrdR family. The cofactor is Zn(2+).

In terms of biological role, negatively regulates transcription of bacterial ribonucleotide reductase nrd genes and operons by binding to NrdR-boxes. The chain is Transcriptional repressor NrdR from Salmonella schwarzengrund (strain CVM19633).